A 185-amino-acid chain; its full sequence is Ribosome-recycling factor (185 aa).

It belongs to the RRF family.

The protein localises to the cytoplasm. Functionally, responsible for the release of ribosomes from messenger RNA at the termination of protein biosynthesis. May increase the efficiency of translation by recycling ribosomes from one round of translation to another. Its function is as follows. Plays a role in sporulation. The sequence is that of Ribosome-recycling factor from Bacillus subtilis (strain 168).